Reading from the N-terminus, the 548-residue chain is 5-epi-aristolochene synthase 1 (548 aa).

D301, D305, D444, T448, and E452 together coordinate Mg(2+). A DDXXD motif motif is present at residues 301-305; the sequence is DDTFD.

The protein belongs to the terpene synthase family. Monomer. It depends on Mg(2+) as a cofactor. In terms of tissue distribution, expressed in roots, but not in shoots.

Its subcellular location is the cytoplasm. It carries out the reaction (2E,6E)-farnesyl diphosphate = (+)-5-epi-aristolochene + diphosphate. Its pathway is secondary metabolite biosynthesis; terpenoid biosynthesis. In terms of biological role, catalyzes the cyclization of trans,trans-farnesyl diphosphate (FPP) to the bicyclic intermediate 5-epi-aristolochene, initial step in the conversion of FPP to the sesquiterpenoid antifungal phytoalexin capsidiol. Produces germacrene A as an enzyme-bound intermediate that is not released by the enzyme, but is further cyclized to produce the bicyclic 5-epi-aristolochene. This chain is 5-epi-aristolochene synthase 1 (EAS), found in Nicotiana attenuata (Coyote tobacco).